A 469-amino-acid chain; its full sequence is Cysteine--tRNA ligase (469 aa).

Zn(2+) is bound at residue Cys29. Positions 31 to 41 (PTVYNYIHIGN) match the 'HIGH' region motif. Cys210, His235, and Glu239 together coordinate Zn(2+). The short motif at 267-271 (KMSKS) is the 'KMSKS' region element. Lys270 is a binding site for ATP.

This sequence belongs to the class-I aminoacyl-tRNA synthetase family. As to quaternary structure, monomer. The cofactor is Zn(2+).

It localises to the cytoplasm. It carries out the reaction tRNA(Cys) + L-cysteine + ATP = L-cysteinyl-tRNA(Cys) + AMP + diphosphate. The polypeptide is Cysteine--tRNA ligase (Thermosipho melanesiensis (strain DSM 12029 / CIP 104789 / BI429)).